The following is a 508-amino-acid chain: MKLAYWMYAGPAHIGTLRISSSFRNVHAIMHAPLGDDYFNVMRSMLERERNFTPVTTSVVDRNVLARGSQEKVIDNILRKDTEERPDLIVLTPTCTSSILQEDLQNFVERAKESAQCDVLLADVNHYRVNELQAADRTLEQIVRFYLDRAQRQGTLPSQRTEQPSVNILGMTTLGFHNRHDTTELQRLMADLGITVNAVIPAGASVEELQHLPRAWFNLVPYREVGLLTAQYLQDTFDQPMVAIAPMGITATADCIRQIQQVLNQQGAAVDFEPFIDRQTRFASEAAWFSHSIDCQNLTGKRAVVFGDNTHAAAFTKILSREMGIHVVLAGTYCKHDADWFEAEVAGYCDRVLISDDHNAIADAIAELEPAAIFGTQMERHVGKRLNIPCGVIAAPVHIQNFPVGYRPFVGYEGANQIVDLVYNSFTLGMEDHLLEIFGGHDTKEVLTKTVSAGSDLDWKPDGLTELNRIPGFVRGKVKRNTEKYAREQGLTAITAEVLYAAKEALGA.

Asp36 contributes to the [4Fe-4S] cluster binding site. The active-site Proton donor is the Asp294. Position 429-430 (429-430 (GM)) interacts with substrate.

This sequence belongs to the ChlB/BchB/BchZ family. As to quaternary structure, protochlorophyllide reductase is composed of three subunits; ChlL, ChlN and ChlB. Forms a heterotetramer of two ChlB and two ChlN subunits. Requires [4Fe-4S] cluster as cofactor.

The catalysed reaction is chlorophyllide a + oxidized 2[4Fe-4S]-[ferredoxin] + 2 ADP + 2 phosphate = protochlorophyllide a + reduced 2[4Fe-4S]-[ferredoxin] + 2 ATP + 2 H2O. Its pathway is porphyrin-containing compound metabolism; chlorophyll biosynthesis (light-independent). Its function is as follows. Component of the dark-operative protochlorophyllide reductase (DPOR) that uses Mg-ATP and reduced ferredoxin to reduce ring D of protochlorophyllide (Pchlide) to form chlorophyllide a (Chlide). This reaction is light-independent. The NB-protein (ChlN-ChlB) is the catalytic component of the complex. This Synechococcus elongatus (strain ATCC 33912 / PCC 7942 / FACHB-805) (Anacystis nidulans R2) protein is Light-independent protochlorophyllide reductase subunit B.